We begin with the raw amino-acid sequence, 444 residues long: Orexin receptor type 2 (444 aa).

Basic and acidic residues predominate over residues 1–10 (MSGTKLEDSP). The interval 1-20 (MSGTKLEDSPPCRNWSSASE) is disordered. The Extracellular segment spans residues 1–54 (MSGTKLEDSPPCRNWSSASELNETQEPFLNPTDYDDEEFLRYLWREYLHPKEYE). N-linked (GlcNAc...) asparagine glycosylation is found at Asn14 and Asn22. The tract at residues 33-49 (DYDDEEFLRYLWREYLH) is required for response to orexin-A. The helical transmembrane segment at 55–75 (WVLIAGYIIVFVVALIGNVLV) threads the bilayer. Residues 76-88 (CVAVWKNHHMRTV) are Cytoplasmic-facing. Residues 89 to 110 (TNYFIVNLSLADVLVTITCLPA) traverse the membrane as a helical segment. Topologically, residues 111 to 127 (TLVVDITETWFFGQSLC) are extracellular. A disulfide bridge connects residues Cys127 and Cys210. A helical membrane pass occupies residues 128–150 (KVIPYLQTVSVSVSVLTLSCIAL). Residues 151-170 (DRWYAICHPLMFKSTAKRAR) are Cytoplasmic-facing. Residues 171–191 (NSIVIIWIVSCIIMIPQAIVM) traverse the membrane as a helical segment. At 192–222 (ECSTVFPGLANKTTLFTVCDERWGGEIYPKM) the chain is on the extracellular side. N-linked (GlcNAc...) asparagine glycosylation is present at Asn202. Residues 223 to 243 (YHICFFLVTYMAPLCLMVLAY) traverse the membrane as a helical segment. At 244–304 (LQIFRKLWCR…QIRARRKTAR (61 aa)) the chain is on the cytoplasmic side. Residues 305-326 (MLMIVLLVFAICYLPISILNVL) form a helical membrane-spanning segment. Asn324 contacts suvorexant. Topologically, residues 327–342 (KRVFGMFAHTEDRETV) are extracellular. Residues 343 to 366 (YAWFTFSHWLVYANSAANPIIYNF) traverse the membrane as a helical segment. Residues 367-444 (LSGKFREEFK…ANGAGPLQNW (78 aa)) lie on the Cytoplasmic side of the membrane.

Belongs to the G-protein coupled receptor 1 family.

The protein localises to the cell membrane. Nonselective, high-affinity receptor for both orexin-A and orexin-B neuropeptides. Triggers an increase in cytoplasmic Ca(2+) levels in response to orexin-A binding. The chain is Orexin receptor type 2 (HCRTR2) from Homo sapiens (Human).